The primary structure comprises 224 residues: Synaptogyrin-2 (224 aa).

Residue Met-1 is modified to N-acetylmethionine. Ser-3 bears the Phosphoserine mark. Residues 20-171 (FLSQPQVVTR…LASLAYQRYK (152 aa)) form the MARVEL domain. Helical transmembrane passes span 31–51 (VSMV…YTNI), 72–92 (SAIG…DAFF), 105–125 (VIGD…GFCF), and 147–167 (AAIT…SLAY).

The protein belongs to the synaptogyrin family. In terms of processing, may be tyrosine phosphorylated by Src.

The protein resides in the cytoplasmic vesicle membrane. It is found in the cytoplasmic vesicle. It localises to the secretory vesicle. The protein localises to the synaptic vesicle membrane. Its function is as follows. May play a role in regulated exocytosis. In neuronal cells, modulates the localization of synaptophysin/SYP into synaptic-like microvesicles and may therefore play a role in the formation and/or the maturation of this vesicles. May also play a role in GLUT4 storage and transport to the plasma membrane. The sequence is that of Synaptogyrin-2 from Mus musculus (Mouse).